The following is a 466-amino-acid chain: Trigger factor (466 aa).

In terms of domain architecture, PPIase FKBP-type spans 162–243 (GDVVSIDLSA…VRSVKERELP (82 aa)). The segment at 428–466 (GNTIDTSEFFGKRVSAGEAEEAEPADEGAARAASDEATT) is disordered. The segment covering 457-466 (ARAASDEATT) has biased composition (low complexity).

The protein belongs to the FKBP-type PPIase family. Tig subfamily.

Its subcellular location is the cytoplasm. It carries out the reaction [protein]-peptidylproline (omega=180) = [protein]-peptidylproline (omega=0). Functionally, involved in protein export. Acts as a chaperone by maintaining the newly synthesized protein in an open conformation. Functions as a peptidyl-prolyl cis-trans isomerase. The sequence is that of Trigger factor from Mycobacterium tuberculosis (strain ATCC 25177 / H37Ra).